A 355-amino-acid chain; its full sequence is uncharacterized protein (355 aa).

The first 22 residues, 1-22, serve as a signal peptide directing secretion; the sequence is MRLTHVTACICLLVAVAVLFSG.

The protein belongs to the bacterial solute-binding protein 1 family. WtpA subfamily.

This is an uncharacterized protein from Methanoculleus marisnigri (strain ATCC 35101 / DSM 1498 / JR1).